Here is a 147-residue protein sequence, read N- to C-terminus: Large ribosomal subunit protein uL11 (147 aa).

The protein belongs to the universal ribosomal protein uL11 family. In terms of assembly, part of the ribosomal stalk of the 50S ribosomal subunit. Interacts with L10 and the large rRNA to form the base of the stalk. L10 forms an elongated spine to which L12 dimers bind in a sequential fashion forming a multimeric L10(L12)X complex. One or more lysine residues are methylated.

Forms part of the ribosomal stalk which helps the ribosome interact with GTP-bound translation factors. This Bacteroides fragilis (strain ATCC 25285 / DSM 2151 / CCUG 4856 / JCM 11019 / LMG 10263 / NCTC 9343 / Onslow / VPI 2553 / EN-2) protein is Large ribosomal subunit protein uL11.